We begin with the raw amino-acid sequence, 498 residues long: NAD(P)H-quinone oxidoreductase chain 4, chloroplastic (498 aa).

Transmembrane regions (helical) follow at residues 4 to 24 (FPWLTTVVVLPIVGGSLIVLF), 37 to 57 (YCICFIDLLLIAYVFCYHFEL), 80 to 100 (FGIDGLSLGPILLTGFITTLA), 112 to 129 (KLFYFLMLAMYSGQLGTF), 134 to 154 (ILLFFIMWELELIPVYLLLSM), 167 to 187 (FILYTAGSSVFLLLGILGMSL), 208 to 228 (ALEIIFYMGFLIAFAVKSPII), 242 to 262 (HYSTCMLLAGILLKMGAYGLV), 272 to 292 (AHSIFCPWLMLLGSIQIIYAA), 305 to 325 (IAYSSVSHMGFLILGIGSISE), 330 to 350 (GAILQIISHGFIGAALFFLAG), 386 to 406 (LALPGMSGFVAELIVLLGIIT), 416 to 436 (ILITFVTAIGMILTPIYSLSI), and 463 to 483 (FISISILIPVISIGIYPDFIF).

It belongs to the complex I subunit 4 family.

It is found in the plastid. The protein localises to the chloroplast thylakoid membrane. The catalysed reaction is a plastoquinone + NADH + (n+1) H(+)(in) = a plastoquinol + NAD(+) + n H(+)(out). It catalyses the reaction a plastoquinone + NADPH + (n+1) H(+)(in) = a plastoquinol + NADP(+) + n H(+)(out). In Phaseolus vulgaris (Kidney bean), this protein is NAD(P)H-quinone oxidoreductase chain 4, chloroplastic.